We begin with the raw amino-acid sequence, 70 residues long: Large ribosomal subunit protein eL38 (70 aa).

It belongs to the eukaryotic ribosomal protein eL38 family.

The polypeptide is Large ribosomal subunit protein eL38 (RpL38) (Spodoptera frugiperda (Fall armyworm)).